A 208-amino-acid chain; its full sequence is Heart- and neural crest derivatives-expressed protein 2 (208 aa).

Disordered stretches follow at residues 79–106 and 161–197; these read AGAV…TQSI and EFKK…RTGW. Positions 88–103 are enriched in basic residues; sequence TVKRRPTANRKERRRT. Positions 90–142 constitute a bHLH domain; the sequence is KRRPTANRKERRRTQSINSAFAELRECIPNVPADTKLSKIKTLRLATSYIAYL. Residues 161–178 show a composition bias toward basic and acidic residues; it reads EFKKTDAKEERRKKEMND.

In terms of assembly, efficient DNA binding requires dimerization with another bHLH protein.

The protein localises to the nucleus. In terms of biological role, essential for myocardial and pectoral fin differentiation, patterning and morphogenesis. This Danio rerio (Zebrafish) protein is Heart- and neural crest derivatives-expressed protein 2 (hand2).